A 734-amino-acid chain; its full sequence is Meiotic driver SPOK1 (734 aa).

Residues Lys4–Glu41 adopt a coiled-coil conformation. Disordered regions lie at residues Glu180 to Asn222 and Leu414 to Pro499. A compositionally biased stretch (polar residues) spans Ser416–Thr429. Basic and acidic residues predominate over residues Asn457–Glu468.

Its subcellular location is the cytoplasm. The protein localises to the nucleus. Promotes unequal transmission of alleles from the parental zygote to progeny spores by acting as poison/antidote system, leading to poisoning of progeny that do not inherit the allele. May possess DNA nuclease activity that leads to spore killing, and a kinase activity that confers resistance to the nuclease activity. Can suppress meiotic drive by the P.anserina SPOK2, SPOK3 and SPOK4 proteins. In Podospora comata, this protein is Meiotic driver SPOK1.